Here is a 333-residue protein sequence, read N- to C-terminus: Transaldolase (333 aa).

The active-site Schiff-base intermediate with substrate is Lys135.

Belongs to the transaldolase family. Type 1 subfamily. As to quaternary structure, homodimer.

Its subcellular location is the cytoplasm. The enzyme catalyses D-sedoheptulose 7-phosphate + D-glyceraldehyde 3-phosphate = D-erythrose 4-phosphate + beta-D-fructose 6-phosphate. It functions in the pathway carbohydrate degradation; pentose phosphate pathway; D-glyceraldehyde 3-phosphate and beta-D-fructose 6-phosphate from D-ribose 5-phosphate and D-xylulose 5-phosphate (non-oxidative stage): step 2/3. Transaldolase is important for the balance of metabolites in the pentose-phosphate pathway. The polypeptide is Transaldolase (Prochlorococcus marinus (strain MIT 9312)).